Here is a 149-residue protein sequence, read N- to C-terminus: Transcriptional repressor NrdR (149 aa).

The segment at cysteine 3–cysteine 34 is a zinc-finger region. The 91-residue stretch at proline 49–glutamate 139 folds into the ATP-cone domain.

This sequence belongs to the NrdR family. The cofactor is Zn(2+).

Functionally, negatively regulates transcription of bacterial ribonucleotide reductase nrd genes and operons by binding to NrdR-boxes. This chain is Transcriptional repressor NrdR, found in Aliivibrio fischeri (strain ATCC 700601 / ES114) (Vibrio fischeri).